A 1228-amino-acid polypeptide reads, in one-letter code: MAVTKRAGRRAQGGTQPAKGAQGVKKATFESGKKREVGVSDLTLLSKVSEEAINENLKKRFENGTIYTYIGHVLISVNPFRDLGIYTDAVLESYKGKNRLEVPPHVFSIAESMYYNMKSYSENQCVIISGESGAGKTEASKRIMQYIASASGGSSSNIQKIKDMVLATNPLLEAFGCAKTLRNDNSSRHGKYLEIQFNNQAEPVGANITNYLLEKGRVVGQIRNERNFHIFYQFAKAASENYRSTFGIQPPEAYTYTSASGCTSVNGINDEAEFKETLAAMNLIGLTQAEQDNLFKLLAAILWIGNMSFVEDKDGNAAIADVSVPNFVAYLLEVDAESVVKAVTQRIMETSRGGRRGSVYEVALNIAQATSVRDALAKGIYNNLFDWIVERVNQSLRAPQDAARTIGILDIYGFEIFESNSFEQICINYVNEKLQQIFIQLTLKTEQDEYVREQIAWTPINYFNNKIVCDLIEEKRPPGIFAALNDACATAHADPNAADENFIQRMSMVGQNPHFEQRQRKFVIKHYAGDVTYDVKGITDKNKDQLLKDILILLQKSGNPFLVSLFPDPVNTDNRRRPPTASDKIKKSANDLVTTLSAAQPSYIRTIKPNQNRSPTEYDEKAVLHQVKYLGLQENVRIRRAGFAYRQTFEKFVERFMLLSGKTSYAGDYIWQGSAYDATLCILRDAGIPQTEYQMGTTKVFIKTPETLFALEHMRDMWWHNMAARIQRAWRRYLAYKTECAIKIQRFWRLKRGLDGLKEIQFRDSGHKLLGGRKERRTYSLIGYRRFQGDYLGCNNGSGFGDFLMKQIGVTDKVFFSCRGQLQQSRLGRSSVRVPRTFILTKNNFYVVAQQIHQKQLVVTNEYTIPVRNITHMSMSNLRDDWFCLNQASSPYGDQLMWCVFKTELAVQLRVVKPGVDIRIGPQIDYFKKQGKKASVKFQKTTTLQTKFDMYKSGSVQVPPGAPPNSVSKETPRGRAKGSRGGAPSRPAARGNAAHTPTPGAAALGYQQHQPGSAQPASPRARKAPPPAPNSRGNGHAESAQPQAYNNLQPHYQSLVNPRSGQGQQQQQHHQAYQQPTAAQPAATSYSPAPAKAAPPPPPPAPPAAPAAPAEPTYKALYDYVANGLNQLSISAGEQVLISVKEDQGWWLAKRMDGSEEGWTPAAYLEEVQGGAAAPPPAAPTAGGASAGASLAEALKQKQQSNQTLGAGIADAIKARTGRPADDDDDDW.

Residues 1–27 (MAVTKRAGRRAQGGTQPAKGAQGVKKA) form a disordered region. In terms of domain architecture, Myosin motor spans 37 to 716 (VGVSDLTLLS…TLFALEHMRD (680 aa)). Position 130-137 (130-137 (GESGAGKT)) interacts with ATP. S358 is subject to Phosphoserine. The actin-binding stretch occupies residues 405-487 (TIGILDIYGF…PGIFAALNDA (83 aa)). 2 IQ domains span residues 720–740 (HNMA…KTEC) and 741–768 (AIKI…SGHK). The TH1 domain maps to 776–962 (RRTYSLIGYR…SGSVQVPPGA (187 aa)). Disordered stretches follow at residues 953–1040 (SGSV…AESA), 1053–1109 (QSLV…PAAP), and 1169–1228 (QGGA…DDDW). Residues 1053–1063 (QSLVNPRSGQG) are compositionally biased toward polar residues. A compositionally biased stretch (low complexity) spans 1064–1092 (QQQQQHHQAYQQPTAAQPAATSYSPAPAK). Over residues 1093–1106 (AAPPPPPPAPPAAP) the composition is skewed to pro residues. The region spanning 1109–1170 (PAEPTYKALY…PAAYLEEVQG (62 aa)) is the SH3 domain. Residues 1180 to 1194 (PTAGGASAGASLAEA) show a composition bias toward low complexity.

Belongs to the TRAFAC class myosin-kinesin ATPase superfamily. Myosin family. In terms of processing, phosphorylation of the TEDS site (Ser-358) is required for the polarization of the actin cytoskeleton. Phosphorylation probably activates the myosin-I ATPase activity.

Its subcellular location is the cytoplasm. The protein localises to the cytoskeleton. The protein resides in the actin patch. In terms of biological role, type-I myosin implicated in the organization of the actin cytoskeleton. Required for proper actin cytoskeleton polarization. At the cell cortex, assembles in patch-like structures together with proteins from the actin-polymerizing machinery and promotes actin assembly. Functions as actin nucleation-promoting factor (NPF) for the Arp2/3 complex. This Yarrowia lipolytica (strain CLIB 122 / E 150) (Yeast) protein is Myosin-1 (MYO1).